The sequence spans 321 residues: Basic leucine zipper 34 (321 aa).

The tract at residues 97–189 (TDDDNLHSNP…SGNRILDPKR (93 aa)) is disordered. 3 stretches are compositionally biased toward low complexity: residues 110–133 (NNKN…NSFN), 145–155 (NMNNNINNNYN), and 172–182 (SNNNSGDSSGN). Residues 186–238 (DPKRVKRILANRQSAQRSRVRKLQYISELERSVTSLQAEVSVLSPRVAFLDHQ) enclose the bZIP domain. The interval 188–207 (KRVKRILANRQSAQRSRVRK) is basic motif. The segment at 214 to 235 (LERSVTSLQAEVSVLSPRVAFL) is leucine-zipper.

As to quaternary structure, forms heterodimers with BZIP18, BZIP43 and VIP1/BZIP51. Expressed in vascular tissues of leaves, stems and siliques, anthers, filaments, tapetum, mature pollen grains, pistil vascular tissues and papillar cells, and funiculi.

It is found in the nucleus. In terms of biological role, transcriptional activator involved in the sporophytic control of cell wall patterning and gametophytic control of pollen development. May play a role in the control of metabolic pathways regulating cellular transport and lipid metabolism. The protein is Basic leucine zipper 34 of Arabidopsis thaliana (Mouse-ear cress).